Reading from the N-terminus, the 271-residue chain is Urease accessory protein UreD (271 aa).

It belongs to the UreD family. In terms of assembly, ureD, UreF and UreG form a complex that acts as a GTP-hydrolysis-dependent molecular chaperone, activating the urease apoprotein by helping to assemble the nickel containing metallocenter of UreC. The UreE protein probably delivers the nickel.

Its subcellular location is the cytoplasm. Its function is as follows. Required for maturation of urease via the functional incorporation of the urease nickel metallocenter. This Mycolicibacterium smegmatis (strain ATCC 700084 / mc(2)155) (Mycobacterium smegmatis) protein is Urease accessory protein UreD.